Here is a 317-residue protein sequence, read N- to C-terminus: Aspartate carbamoyltransferase catalytic subunit (317 aa).

Carbamoyl phosphate-binding residues include Arg-66 and Thr-67. Lys-94 lines the L-aspartate pocket. The carbamoyl phosphate site is built by Arg-116, His-144, and Gln-147. Arg-177 and Arg-231 together coordinate L-aspartate. Carbamoyl phosphate-binding residues include Gly-272 and Pro-273.

It belongs to the aspartate/ornithine carbamoyltransferase superfamily. ATCase family. Heterododecamer (2C3:3R2) of six catalytic PyrB chains organized as two trimers (C3), and six regulatory PyrI chains organized as three dimers (R2).

The catalysed reaction is carbamoyl phosphate + L-aspartate = N-carbamoyl-L-aspartate + phosphate + H(+). It functions in the pathway pyrimidine metabolism; UMP biosynthesis via de novo pathway; (S)-dihydroorotate from bicarbonate: step 2/3. Functionally, catalyzes the condensation of carbamoyl phosphate and aspartate to form carbamoyl aspartate and inorganic phosphate, the committed step in the de novo pyrimidine nucleotide biosynthesis pathway. This Nitrobacter winogradskyi (strain ATCC 25391 / DSM 10237 / CIP 104748 / NCIMB 11846 / Nb-255) protein is Aspartate carbamoyltransferase catalytic subunit.